Here is a 331-residue protein sequence, read N- to C-terminus: DNA-directed RNA polymerase subunit alpha (331 aa).

Residues 1–246 form an alpha N-terminal domain (alpha-NTD) region; it reads MMQTSRTLHN…GLFSPLQEVS (246 aa). Positions 256–331 are alpha C-terminal domain (alpha-CTD); that stretch reads AEDNQKNQIP…LTLPRERSKT (76 aa).

Belongs to the RNA polymerase alpha chain family. In cyanobacteria the RNAP catalytic core is composed of 2 alpha, 1 beta, 1 beta', 1 gamma and 1 omega subunit. When a sigma factor is associated with the core the holoenzyme is formed, which can initiate transcription.

It catalyses the reaction RNA(n) + a ribonucleoside 5'-triphosphate = RNA(n+1) + diphosphate. Its function is as follows. DNA-dependent RNA polymerase catalyzes the transcription of DNA into RNA using the four ribonucleoside triphosphates as substrates. The protein is DNA-directed RNA polymerase subunit alpha of Synechococcus sp. (strain JA-3-3Ab) (Cyanobacteria bacterium Yellowstone A-Prime).